The sequence spans 376 residues: Alpha-ketoglutarate-dependent dioxygenase esdpJ (376 aa).

Residues His145 and Asp147 each contribute to the Fe cation site. Thr202 serves as a coordination point for 2-oxoglutarate. Residues 234-260 form a disordered region; that stretch reads YNQSSQEKKSEIHVEPRGSPNNVGSDL. Residues 239–249 show a composition bias toward basic and acidic residues; that stretch reads QEKKSEIHVEP. His335 is a binding site for Fe cation. Positions 347 and 351 each coordinate 2-oxoglutarate. The segment at 354-376 is disordered; that stretch reads GVGEQPYLDPESKTRREALGEFN. The span at 363 to 376 shows a compositional bias: basic and acidic residues; sequence PESKTRREALGEFN.

The protein belongs to the TfdA dioxygenase family. Requires Fe(2+) as cofactor.

Its function is as follows. Alpha-ketoglutarate-dependent dioxygenas; part of the cluster that mediates the biosynthesis of shearones, diterpenoid pyrones (DPs) which are structurally diverse meroterpenoids consisting of a diterpene linked by a pyrone, and which may exhibit a range of bioactivities. The alpha-ketoglutarate-dependent dioxygenase esdpJ seems not to be involved in this pathway. The molecular scaffold is commonly biosynthesized by a series of enzymes including the non-reducing polyketide synthase (NR-PKS) esdpA that generates an alpha-pyrone; the prenyltransferase esdpC that attaches a geranylgeranyl pyrophosphate (GGPP) produced by the GGPP synthase (GGPPS) esdpD onto the pyrone unit; the FAD-dependent monooxygenase esdpE that converts an olefin on the diterpene unit into an epoxide; and the terpene cyclase esdpB that catalyzes the cyclization reactions to give the molecular backbone shearone A. In the modification steps, esdpF oxidizes the hydroxy group to a ketone at C-3 and esdpG then attaches hydroxy groups at both C-11 and C-12. After that, esdpI hydroxylates at C-20 and esdpH hydroxylates at C-6'. The ether bridge is generated by nucleophilic attack of the hydroxy group at C-20 to the carbonyl carbon at C-3. EsdpH can also functions prior to esdpI. The different combinations of these modification enzymes lead to the production of diverse shearone derivatives, shearone I being the end product of the pathway. This is Alpha-ketoglutarate-dependent dioxygenase esdpJ from Penicillium shearii (Eupenicillium shearii).